The chain runs to 571 residues: Proline--tRNA ligase (571 aa).

The protein belongs to the class-II aminoacyl-tRNA synthetase family. ProS type 1 subfamily. As to quaternary structure, homodimer.

Its subcellular location is the cytoplasm. It carries out the reaction tRNA(Pro) + L-proline + ATP = L-prolyl-tRNA(Pro) + AMP + diphosphate. Catalyzes the attachment of proline to tRNA(Pro) in a two-step reaction: proline is first activated by ATP to form Pro-AMP and then transferred to the acceptor end of tRNA(Pro). As ProRS can inadvertently accommodate and process non-cognate amino acids such as alanine and cysteine, to avoid such errors it has two additional distinct editing activities against alanine. One activity is designated as 'pretransfer' editing and involves the tRNA(Pro)-independent hydrolysis of activated Ala-AMP. The other activity is designated 'posttransfer' editing and involves deacylation of mischarged Ala-tRNA(Pro). The misacylated Cys-tRNA(Pro) is not edited by ProRS. This is Proline--tRNA ligase from Acinetobacter baumannii (strain ATCC 17978 / DSM 105126 / CIP 53.77 / LMG 1025 / NCDC KC755 / 5377).